Here is a 960-residue protein sequence, read N- to C-terminus: Testis anion transporter 1 (960 aa).

The Cytoplasmic segment spans residues 1 to 93 (MQPDRSFQSF…YRFKDWLLGD (93 aa)). Residues 94-114 (LLAGISVGLVQIPQVLMLGLL) form a helical membrane-spanning segment. The Extracellular portion of the chain corresponds to 115–117 (ARH). Residues 118–138 (LIPPLNVSYAAFCASVIYGIF) traverse the membrane as a helical segment. Glycine 139 is a topological domain (cytoplasmic). The chain crosses the membrane as a helical span at residues 140 to 160 (SCHQMSIGTFFLVSALAINVL). At 161 to 201 (RTQPFNRGHLLLGTFIQADFSNTSFYENYNRSLSSVASVTL) the chain is on the extracellular side. N-linked (GlcNAc...) asparagine glycosylation is present at asparagine 190. 2 helical membrane passes run 202–222 (LTGI…VAYI) and 223–243 (PEAA…LSQL). Residues 244–268 (TCIFGIMISYNSGPIAFFYNIINYC) are Cytoplasmic-facing. The chain crosses the membrane as a helical span at residues 269-289 (LGLPKANSTSILLFLTAMVAL). Over 290 to 353 (RINKCIRISF…PVTPDMSNLT (64 aa)) the chain is Extracellular. The chain crosses the membrane as a helical span at residues 354–374 (EVLIESFSLALVSSSLLVFLG). At 375–390 (KKIASFHNYDVNSNQD) the chain is on the cytoplasmic side. Residues 391 to 411 (LIAIGLCNVVSSFFRSYVFTG) traverse the membrane as a helical segment. The Extracellular segment spans residues 412–427 (AVARTIIQDKTGGRQQ). A helical membrane pass occupies residues 428-448 (FASLVGAGIMLLLMMKMARFF). The Cytoplasmic portion of the chain corresponds to 449–453 (YRLPN). Residues 454–474 (AIVAGIILSNVLPYLEAVYTL) form a helical membrane-spanning segment. Over 475–494 (PSLWRQNQYDCLIWMVTFMS) the chain is Extracellular. The chain crosses the membrane as a helical span at residues 495 to 515 (AILLGLDIGLVVAVTFAFFII). Residues 516–960 (TVQSHRTKIL…ADTSEDALEI (445 aa)) are Cytoplasmic-facing. Residues 541–792 (DYREVANIPG…LTLHDAVLFA (252 aa)) form the STAS domain. Residues 662 to 957 (ITSSSSQRNP…TSKADTSEDA (296 aa)) form an interaction with RACGAP1 region. Disordered stretches follow at residues 807-857 (ESET…EESD) and 881-960 (EVEP…ALEI). Over residues 818-827 (ETDKKEESRH) the composition is skewed to basic and acidic residues. Over residues 884–904 (PESELEPESELDQETELEPEP) the composition is skewed to acidic residues. The span at 926–935 (SPTQTQARTQ) shows a compositional bias: polar residues.

It belongs to the SLC26A/SulP transporter (TC 2.A.53) family. Interacts with RACGAP1. Interacts with CFTR; stimulates anion transport activity of CFTR. N-glycosylated.

It localises to the membrane. The enzyme catalyses sulfate(out) + chloride(in) = sulfate(in) + chloride(out). It carries out the reaction oxalate(in) + chloride(out) = oxalate(out) + chloride(in). In terms of biological role, antiporter that mediates the exchange of sulfate and oxalate against chloride ions across a membrane. Stimulates anion transport activity of CFTR. May cooperate with CFTR in the regulation of chloride and bicarbonate ions fluxes required for activation of the ADCY10/PKA pathway during sperm motility and sperm capacitation. May play a role in sperm tail differentiation and motility and hence male fertility. The chain is Testis anion transporter 1 from Bos taurus (Bovine).